The primary structure comprises 358 residues: Biotin synthase (358 aa).

The 224-residue stretch at 55 to 278 (NKVRIHILDN…VNPDSEIRIA (224 aa)) folds into the Radical SAM core domain. C70, C74, and C77 together coordinate [4Fe-4S] cluster. 4 residues coordinate [2Fe-2S] cluster: C114, C146, C206, and R276.

This sequence belongs to the radical SAM superfamily. Biotin synthase family. As to quaternary structure, homodimer. The cofactor is [4Fe-4S] cluster. [2Fe-2S] cluster serves as cofactor.

It catalyses the reaction (4R,5S)-dethiobiotin + (sulfur carrier)-SH + 2 reduced [2Fe-2S]-[ferredoxin] + 2 S-adenosyl-L-methionine = (sulfur carrier)-H + biotin + 2 5'-deoxyadenosine + 2 L-methionine + 2 oxidized [2Fe-2S]-[ferredoxin]. Its pathway is cofactor biosynthesis; biotin biosynthesis; biotin from 7,8-diaminononanoate: step 2/2. In terms of biological role, catalyzes the conversion of dethiobiotin (DTB) to biotin by the insertion of a sulfur atom into dethiobiotin via a radical-based mechanism. This chain is Biotin synthase, found in Leptospira borgpetersenii serovar Hardjo-bovis (strain JB197).